A 387-amino-acid chain; its full sequence is S-adenosylmethionine synthase (387 aa).

ATP is bound at residue His17. Asp19 is a binding site for Mg(2+). A K(+)-binding site is contributed by Glu45. L-methionine is bound by residues Glu58 and Gln101. The segment at Gln101–Ala111 is flexible loop. ATP is bound by residues Asp166–Lys168, Arg231–Phe232, Asp240, Arg246–Lys247, Ala263, and Lys267. An L-methionine-binding site is contributed by Asp240. Lys271 provides a ligand contact to L-methionine.

The protein belongs to the AdoMet synthase family. Homotetramer; dimer of dimers. Mg(2+) is required as a cofactor. It depends on K(+) as a cofactor.

It is found in the cytoplasm. The enzyme catalyses L-methionine + ATP + H2O = S-adenosyl-L-methionine + phosphate + diphosphate. Its pathway is amino-acid biosynthesis; S-adenosyl-L-methionine biosynthesis; S-adenosyl-L-methionine from L-methionine: step 1/1. Functionally, catalyzes the formation of S-adenosylmethionine (AdoMet) from methionine and ATP. The overall synthetic reaction is composed of two sequential steps, AdoMet formation and the subsequent tripolyphosphate hydrolysis which occurs prior to release of AdoMet from the enzyme. The chain is S-adenosylmethionine synthase from Rhodospirillum centenum (strain ATCC 51521 / SW).